We begin with the raw amino-acid sequence, 113 residues long: Tubulin-specific chaperone A (113 aa).

This sequence belongs to the TBCA family. In terms of assembly, supercomplex made of cofactors A to E. Cofactors A and D function by capturing and stabilizing tubulin in a quasi-native conformation. Cofactor E binds to the cofactor D-tubulin complex; interaction with cofactor C then causes the release of tubulin polypeptides that are committed to the native state.

Its subcellular location is the cytoplasm. The protein resides in the cytoskeleton. In terms of biological role, tubulin-folding protein; involved in the early step of the tubulin folding pathway. The chain is Tubulin-specific chaperone A (tbca) from Dictyostelium discoideum (Social amoeba).